The following is a 197-amino-acid chain: Elongation factor Ts (197 aa).

The interval 81 to 84 is involved in Mg(2+) ion dislocation from EF-Tu; it reads TDFV.

It belongs to the EF-Ts family.

It is found in the cytoplasm. In terms of biological role, associates with the EF-Tu.GDP complex and induces the exchange of GDP to GTP. It remains bound to the aminoacyl-tRNA.EF-Tu.GTP complex up to the GTP hydrolysis stage on the ribosome. In Persephonella marina (strain DSM 14350 / EX-H1), this protein is Elongation factor Ts.